A 505-amino-acid chain; its full sequence is Deoxyguanosinetriphosphate triphosphohydrolase (505 aa).

The HD domain occupies 66 to 273 (RLTHSMEVQQ…MEAADDISYC (208 aa)).

This sequence belongs to the dGTPase family. Type 1 subfamily. As to quaternary structure, homotetramer. Requires Mg(2+) as cofactor.

The enzyme catalyses dGTP + H2O = 2'-deoxyguanosine + triphosphate + H(+). DGTPase preferentially hydrolyzes dGTP over the other canonical NTPs. In Escherichia coli O17:K52:H18 (strain UMN026 / ExPEC), this protein is Deoxyguanosinetriphosphate triphosphohydrolase.